The chain runs to 1031 residues: Exportin-T (1031 aa).

It belongs to the exportin family.

It localises to the nucleus. The protein localises to the cytoplasm. Its function is as follows. tRNA nucleus export receptor which facilitates tRNA translocation across the nuclear pore complex. Involved in pre-tRNA splicing, probably by affecting the interaction of pre-tRNA with splicing endonuclease. This is Exportin-T (los1) from Emericella nidulans (strain FGSC A4 / ATCC 38163 / CBS 112.46 / NRRL 194 / M139) (Aspergillus nidulans).